An 88-amino-acid polypeptide reads, in one-letter code: Large ribosomal subunit protein bL27 (88 aa).

The segment covering 1 to 13 (MATKKSGGSSSNG) has biased composition (low complexity). Residues 1–24 (MATKKSGGSSSNGRDSRGRRLGVK) are disordered.

This sequence belongs to the bacterial ribosomal protein bL27 family.

The protein is Large ribosomal subunit protein bL27 of Ehrlichia ruminantium (strain Gardel).